The primary structure comprises 339 residues: Transmembrane protein 120B (339 aa).

The stretch at 1-67 (MSGQLERCER…KHTLQRYKRH (67 aa)) forms a coiled coil. Transmembrane regions (helical) follow at residues 102-124 (GLYLNLVLGNVSVTLLSNQAKFA), 132-152 (FKLYLTIILLLGAVACRFVLH), 159-179 (VFNFLLVWYYCTLTIRESILI), 187-207 (GWWVSHHYVSTFLSGVMLTWP), 270-290 (FLLPFLFCGHFWQLYNAVTLF), and 302-322 (QVFVLALTFLILFLGNFLTTL).

The protein belongs to the TMEM120 family. Heterooligomer with TMEM120A. Expressed in inguinal and subcutaneous white adipose tissue and in brown adipose tissue.

It is found in the nucleus inner membrane. In terms of biological role, necessary for efficient adipogenesis. Does not show ion channel activity. This chain is Transmembrane protein 120B, found in Mus musculus (Mouse).